Consider the following 152-residue polypeptide: S-Adenosylmethionine lyase (152 aa).

As to quaternary structure, homotetramer. Interacts with host METK; this interaction induces the polymerization of METK into filaments that are enzymatically inactive.

The catalysed reaction is S-adenosyl-L-methionine = L-homoserine lactone + S-methyl-5'-thioadenosine. Degrades the intracellular SAM pools of the host cell and inhibits the host S-adenosylmethionine synthase METK/MAT, thereby preventing methylation of the viral genome. Induces the polymerization of METK into filaments that are enzymatically inactive. Keeping the viral genome in an unmethylated state allows the phage to shift from a lytic infection under normal growth conditions to a transient lysogenic infection under glucose starvation, by blocking its own expression. Does not protect the virus immune against host restriction-modification systems. The polypeptide is S-Adenosylmethionine lyase (Escherichia coli (Bacteriophage T3)).